We begin with the raw amino-acid sequence, 403 residues long: Argininosuccinate synthase (403 aa).

Residues 13 to 21 (AYSGGLDTS) and Ala40 contribute to the ATP site. L-citrulline is bound by residues Tyr92 and Ser97. ATP is bound at residue Gly122. Thr124, Asn128, and Asp129 together coordinate L-aspartate. Asn128 serves as a coordination point for L-citrulline. The L-citrulline site is built by Arg132, Ser181, Ser190, Glu266, and Tyr278.

Belongs to the argininosuccinate synthase family. Type 1 subfamily. As to quaternary structure, homotetramer.

It localises to the cytoplasm. The enzyme catalyses L-citrulline + L-aspartate + ATP = 2-(N(omega)-L-arginino)succinate + AMP + diphosphate + H(+). The protein operates within amino-acid biosynthesis; L-arginine biosynthesis; L-arginine from L-ornithine and carbamoyl phosphate: step 2/3. The sequence is that of Argininosuccinate synthase from Aliivibrio fischeri (strain ATCC 700601 / ES114) (Vibrio fischeri).